The sequence spans 306 residues: Glutaminase (306 aa).

7 residues coordinate substrate: Ser64, Asn115, Glu159, Asn166, Tyr190, Tyr242, and Val260.

This sequence belongs to the glutaminase family. In terms of assembly, homotetramer.

The catalysed reaction is L-glutamine + H2O = L-glutamate + NH4(+). The sequence is that of Glutaminase from Aliivibrio salmonicida (strain LFI1238) (Vibrio salmonicida (strain LFI1238)).